The primary structure comprises 133 residues: Holo-[acyl-carrier-protein] synthase (133 aa).

The Mg(2+) site is built by aspartate 8 and glutamate 57.

This sequence belongs to the P-Pant transferase superfamily. AcpS family. It depends on Mg(2+) as a cofactor.

It is found in the cytoplasm. It carries out the reaction apo-[ACP] + CoA = holo-[ACP] + adenosine 3',5'-bisphosphate + H(+). Transfers the 4'-phosphopantetheine moiety from coenzyme A to a Ser of acyl-carrier-protein. In Caulobacter sp. (strain K31), this protein is Holo-[acyl-carrier-protein] synthase.